The following is a 155-amino-acid chain: SsrA-binding protein (155 aa).

This sequence belongs to the SmpB family.

The protein resides in the cytoplasm. Functionally, required for rescue of stalled ribosomes mediated by trans-translation. Binds to transfer-messenger RNA (tmRNA), required for stable association of tmRNA with ribosomes. tmRNA and SmpB together mimic tRNA shape, replacing the anticodon stem-loop with SmpB. tmRNA is encoded by the ssrA gene; the 2 termini fold to resemble tRNA(Ala) and it encodes a 'tag peptide', a short internal open reading frame. During trans-translation Ala-aminoacylated tmRNA acts like a tRNA, entering the A-site of stalled ribosomes, displacing the stalled mRNA. The ribosome then switches to translate the ORF on the tmRNA; the nascent peptide is terminated with the 'tag peptide' encoded by the tmRNA and targeted for degradation. The ribosome is freed to recommence translation, which seems to be the essential function of trans-translation. The protein is SsrA-binding protein of Oenococcus oeni (strain ATCC BAA-331 / PSU-1).